Reading from the N-terminus, the 405-residue chain is Cytoplasmic polyadenylated homeobox-like protein (405 aa).

2 disordered regions span residues 1-33 (MNLD…KHRH) and 340-363 (PWDL…QNNG). Positions 13-23 (EEDHHNEERQT) are enriched in basic and acidic residues. The segment covering 24 to 33 (KNKRKTKHRH) has biased composition (basic residues). The homeobox DNA-binding region spans 28-87 (KTKHRHKFSEELLQELKEIFGENCYPDYTTRKTLAIKFDCPVNVIDNWFQNKRARLPPAE). Low complexity predominate over residues 346–360 (QWSSAQSQLQSQLPQ).

It localises to the nucleus. Functionally, transcription factor that acts as activator. The sequence is that of Cytoplasmic polyadenylated homeobox-like protein from Homo sapiens (Human).